A 762-amino-acid chain; its full sequence is 5-methyltetrahydropteroyltriglutamate--homocysteine methyltransferase (762 aa).

5-methyltetrahydropteroyltri-L-glutamate contacts are provided by residues 17–20 (REWK) and Lys111. L-homocysteine-binding positions include 435–437 (IGS) and Glu488. L-methionine-binding positions include 435-437 (IGS) and Glu488. 5-methyltetrahydropteroyltri-L-glutamate contacts are provided by residues 519–520 (RC) and Trp565. Asp603 is a binding site for L-homocysteine. An L-methionine-binding site is contributed by Asp603. Glu609 is a 5-methyltetrahydropteroyltri-L-glutamate binding site. Residues His645, Cys647, and Glu669 each coordinate Zn(2+). The active-site Proton donor is His698. Cys730 provides a ligand contact to Zn(2+).

Belongs to the vitamin-B12 independent methionine synthase family. Requires Zn(2+) as cofactor.

The catalysed reaction is 5-methyltetrahydropteroyltri-L-glutamate + L-homocysteine = tetrahydropteroyltri-L-glutamate + L-methionine. Its pathway is amino-acid biosynthesis; L-methionine biosynthesis via de novo pathway; L-methionine from L-homocysteine (MetE route): step 1/1. Functionally, catalyzes the transfer of a methyl group from 5-methyltetrahydrofolate to homocysteine resulting in methionine formation. The sequence is that of 5-methyltetrahydropteroyltriglutamate--homocysteine methyltransferase from Bacillus cytotoxicus (strain DSM 22905 / CIP 110041 / 391-98 / NVH 391-98).